A 105-amino-acid chain; its full sequence is MIPGEIIVNKALGEIELNQGYDKYTLSVANIGDRPIQVGSHYHFYEVNEFLSFDREPTLGFRLDIPAGMAVRFEPGQSRTVELVAYSGKRIIQGFDGKVMGKIKE.

The protein belongs to the urease beta subunit family. In terms of assembly, heterotrimer of UreA (gamma), UreB (beta) and UreC (alpha) subunits. Three heterotrimers associate to form the active enzyme.

Its subcellular location is the cytoplasm. It catalyses the reaction urea + 2 H2O + H(+) = hydrogencarbonate + 2 NH4(+). The protein operates within nitrogen metabolism; urea degradation; CO(2) and NH(3) from urea (urease route): step 1/1. This chain is Urease subunit beta, found in Shewanella halifaxensis (strain HAW-EB4).